Reading from the N-terminus, the 106-residue chain is Urease subunit beta (106 aa).

This sequence belongs to the urease beta subunit family. Heterotrimer of UreA (gamma), UreB (beta) and UreC (alpha) subunits. Three heterotrimers associate to form the active enzyme.

It localises to the cytoplasm. It catalyses the reaction urea + 2 H2O + H(+) = hydrogencarbonate + 2 NH4(+). It functions in the pathway nitrogen metabolism; urea degradation; CO(2) and NH(3) from urea (urease route): step 1/1. This is Urease subunit beta from Prochlorococcus marinus (strain AS9601).